A 757-amino-acid chain; its full sequence is E3 ubiquitin-protein ligase SMURF1 (757 aa).

A C2 domain is found at 1 to 120 (MSNPGTRRNG…TGYQRLDLCK (120 aa)). The interval 193–237 (GNCRFVESPSQDQRLQAQRLRNPDVRGSLQTPQNRPHGHQSPELP) is disordered. The residue at position 200 (S200) is a Phosphoserine. 2 WW domains span residues 234–267 (PELPEGYEQRTTVQGQVYFLHTQTGVSTWHDPRI) and 306–339 (GPLPPGWEVRSTVSGRIYFVDHNNRTTQFTDPRL). Residues K381 and K383 each participate in a glycyl lysine isopeptide (Lys-Gly) (interchain with G-Cter in ubiquitin) cross-link. The HECT domain maps to 420-757 (RPKDLKKRLM…VEETCGFAVE (338 aa)). C725 acts as the Glycyl thioester intermediate in catalysis.

In terms of assembly, interacts with TRAF4. Interacts (via HECT domain) with FBXL15 (via LRR repeats). Interacts with SMAD7 and TGFBR1; SMAD7 recruits SMURF1 to TGFBR1 and regulates TGF-beta receptor degradation. Interacts with MAVS; the interaction is mediated by NDFIP1. Post-translationally, auto-ubiquitinated in presence of NDFIP1. Ubiquitinated by the SCF(FBXL15) complex at Lys-381 and Lys-383, leading to its degradation by the proteasome. Lys-383 is the primary ubiquitination site. In terms of tissue distribution, expressed in melanocytes.

The protein resides in the cytoplasm. Its subcellular location is the cell membrane. It carries out the reaction S-ubiquitinyl-[E2 ubiquitin-conjugating enzyme]-L-cysteine + [acceptor protein]-L-lysine = [E2 ubiquitin-conjugating enzyme]-L-cysteine + N(6)-ubiquitinyl-[acceptor protein]-L-lysine.. The protein operates within protein modification; protein ubiquitination. In terms of biological role, E3 ubiquitin-protein ligase that acts as a negative regulator of BMP signaling pathway. Mediates ubiquitination and degradation of SMAD1 and SMAD5, 2 receptor-regulated SMADs specific for the BMP pathway. Promotes ubiquitination and subsequent proteasomal degradation of TRAF family members and RHOA. Promotes ubiquitination and subsequent proteasomal degradation of MAVS. Acts as an antagonist of TGF-beta signaling by ubiquitinating TGFBR1 and targeting it for degradation. Plays a role in dendrite formation by melanocytes. The chain is E3 ubiquitin-protein ligase SMURF1 (SMURF1) from Homo sapiens (Human).